A 179-amino-acid chain; its full sequence is Large ribosomal subunit protein uL5 (179 aa).

The protein belongs to the universal ribosomal protein uL5 family. Part of the 50S ribosomal subunit; part of the 5S rRNA/L5/L18/L25 subcomplex. Contacts the 5S rRNA and the P site tRNA. Forms a bridge to the 30S subunit in the 70S ribosome.

In terms of biological role, this is one of the proteins that bind and probably mediate the attachment of the 5S RNA into the large ribosomal subunit, where it forms part of the central protuberance. In the 70S ribosome it contacts protein S13 of the 30S subunit (bridge B1b), connecting the 2 subunits; this bridge is implicated in subunit movement. Contacts the P site tRNA; the 5S rRNA and some of its associated proteins might help stabilize positioning of ribosome-bound tRNAs. The protein is Large ribosomal subunit protein uL5 of Buchnera aphidicola subsp. Acyrthosiphon pisum (strain APS) (Acyrthosiphon pisum symbiotic bacterium).